A 127-amino-acid polypeptide reads, in one-letter code: Thioredoxin (127 aa).

Positions 2–115 (SDGVKHINSA…LRAAAEKMGR (114 aa)) constitute a Thioredoxin domain. Active-site nucleophile residues include C33 and C36. The cysteines at positions 33 and 36 are disulfide-linked.

This sequence belongs to the thioredoxin family.

Its function is as follows. Participates in various redox reactions through the reversible oxidation of its active center dithiol to a disulfide and catalyzes dithiol-disulfide exchange reactions. The sequence is that of Thioredoxin (trx) from Neurospora crassa (strain ATCC 24698 / 74-OR23-1A / CBS 708.71 / DSM 1257 / FGSC 987).